The sequence spans 81 residues: Defensin-like protein 313 (81 aa).

An N-terminal signal peptide occupies residues 1–32; sequence MESKRSSSSPLLILITTIMIIFIISGPKSVDA. 3 disulfide bridges follow: cysteine 34-cysteine 63, cysteine 45-cysteine 74, and cysteine 49-cysteine 76.

Belongs to the DEFL family.

The protein resides in the secreted. The protein is Defensin-like protein 313 of Arabidopsis thaliana (Mouse-ear cress).